We begin with the raw amino-acid sequence, 777 residues long: DNA repair helicase/translocase XPB-R (777 aa).

Residues 212–416 enclose the Helicase ATP-binding domain; the sequence is AASDGALRSG…DLFHLVGPKL (205 aa). 225–232 is a binding site for ATP; it reads LPCGSGKT. The DEVH box signature appears at 369 to 372; it reads DEVH. Residues 484–631 form the Helicase C-terminal domain; sequence IVKRHVAESS…GYTCSVTEFN (148 aa).

This sequence belongs to the helicase family. RAD25/XPB subfamily.

The enzyme catalyses Couples ATP hydrolysis with the unwinding of duplex DNA by translocating in the 3'-5' direction.. It catalyses the reaction ATP + H2O = ADP + phosphate + H(+). Its function is as follows. ATP-dependent 3'-5' DNA helicase/translocase; binds dsDNA rather than ssDNA, unzipping it in a translocase rather than classical helicase activity. Involved in nucleotide excision repair (NER) of damaged DNA. XPB-R is a paralog of XBP, but is not a component of the TFIIH basal transcription factor and is dispensable for RNA polymerase II transcription. This Trypanosoma brucei brucei (strain 927/4 GUTat10.1) protein is DNA repair helicase/translocase XPB-R.